We begin with the raw amino-acid sequence, 138 residues long: Phosphoribosyl-AMP cyclohydrolase (138 aa).

Asp86 is a binding site for Mg(2+). Residue Cys87 participates in Zn(2+) binding. Residues Asp88 and Asp90 each coordinate Mg(2+). Residues Cys104 and Cys111 each coordinate Zn(2+).

The protein belongs to the PRA-CH family. As to quaternary structure, homodimer. Requires Mg(2+) as cofactor. It depends on Zn(2+) as a cofactor.

It localises to the cytoplasm. The enzyme catalyses 1-(5-phospho-beta-D-ribosyl)-5'-AMP + H2O = 1-(5-phospho-beta-D-ribosyl)-5-[(5-phospho-beta-D-ribosylamino)methylideneamino]imidazole-4-carboxamide. It functions in the pathway amino-acid biosynthesis; L-histidine biosynthesis; L-histidine from 5-phospho-alpha-D-ribose 1-diphosphate: step 3/9. Functionally, catalyzes the hydrolysis of the adenine ring of phosphoribosyl-AMP. The protein is Phosphoribosyl-AMP cyclohydrolase of Marinobacter nauticus (strain ATCC 700491 / DSM 11845 / VT8) (Marinobacter aquaeolei).